The chain runs to 372 residues: Alanine racemase (372 aa).

Lys36 serves as the catalytic Proton acceptor; specific for D-alanine. Lys36 carries the post-translational modification N6-(pyridoxal phosphate)lysine. Residue Arg134 coordinates substrate. Tyr266 acts as the Proton acceptor; specific for L-alanine in catalysis. Met314 contacts substrate.

It belongs to the alanine racemase family. Pyridoxal 5'-phosphate serves as cofactor.

The enzyme catalyses L-alanine = D-alanine. The protein operates within amino-acid biosynthesis; D-alanine biosynthesis; D-alanine from L-alanine: step 1/1. Its function is as follows. Catalyzes the interconversion of L-alanine and D-alanine. May also act on other amino acids. The polypeptide is Alanine racemase (alr) (Nitratidesulfovibrio vulgaris (strain DSM 19637 / Miyazaki F) (Desulfovibrio vulgaris)).